Here is a 436-residue protein sequence, read N- to C-terminus: Protein translocase subunit SecY (436 aa).

The next 8 membrane-spanning stretches (helical) occupy residues 17–37, 72–92, 122–142, 146–166, 209–229, 269–289, 309–329, and 380–400; these read ILLT…PVPY, FGLL…IQLL, TFFW…EVIF, LQVY…VLWF, FSNI…CIYI, VMPL…FEII, ISYW…IFFF, and IFLI…NLNI.

The protein belongs to the SecY/SEC61-alpha family. As to quaternary structure, component of the plastid Sec protein translocase complex, which is composed of at least SecY and SecE.

Its subcellular location is the plastid. The protein localises to the chloroplast thylakoid membrane. In terms of biological role, the central subunit of the protein translocation channel SecYE. Consists of two halves. These two domains form a lateral gate at the front which open onto the bilayer between TMs 2 and 7, and are clamped together by SecE at the back. The channel is closed by both a pore ring composed of hydrophobic SecY resides and a short helix (helix 2A) on the extracellular side of the membrane which forms a plug. The chain is Protein translocase subunit SecY from Vaucheria litorea (Yellow-green alga).